The chain runs to 492 residues: Regulatory protein ViaA (492 aa).

It belongs to the ViaA family. Homodimer. Interacts with RavA.

Its subcellular location is the cytoplasm. In terms of biological role, component of the RavA-ViaA chaperone complex, which may act on the membrane to optimize the function of some of the respiratory chains. ViaA stimulates the ATPase activity of RavA. The protein is Regulatory protein ViaA of Pectobacterium carotovorum subsp. carotovorum (strain PC1).